We begin with the raw amino-acid sequence, 632 residues long: DNA gyrase subunit B (632 aa).

A Toprim domain is found at 419–533; it reads RELFIVEGES…SGYLYIAQPP (115 aa). Mg(2+) contacts are provided by Glu425, Asp498, and Asp500.

This sequence belongs to the type II topoisomerase GyrB family. Heterotetramer, composed of two GyrA and two GyrB chains. In the heterotetramer, GyrA contains the active site tyrosine that forms a transient covalent intermediate with DNA, while GyrB binds cofactors and catalyzes ATP hydrolysis. Requires Mg(2+) as cofactor. Mn(2+) serves as cofactor. Ca(2+) is required as a cofactor.

The protein localises to the cytoplasm. The catalysed reaction is ATP-dependent breakage, passage and rejoining of double-stranded DNA.. In terms of biological role, a type II topoisomerase that negatively supercoils closed circular double-stranded (ds) DNA in an ATP-dependent manner to modulate DNA topology and maintain chromosomes in an underwound state. Negative supercoiling favors strand separation, and DNA replication, transcription, recombination and repair, all of which involve strand separation. Also able to catalyze the interconversion of other topological isomers of dsDNA rings, including catenanes and knotted rings. Type II topoisomerases break and join 2 DNA strands simultaneously in an ATP-dependent manner. The chain is DNA gyrase subunit B from Archaeoglobus fulgidus (strain ATCC 49558 / DSM 4304 / JCM 9628 / NBRC 100126 / VC-16).